The sequence spans 273 residues: 5-deoxy-glucuronate isomerase (273 aa).

This sequence belongs to the isomerase IolB family.

The catalysed reaction is 5-deoxy-D-glucuronate = 5-dehydro-2-deoxy-D-gluconate. Its pathway is polyol metabolism; myo-inositol degradation into acetyl-CoA; acetyl-CoA from myo-inositol: step 4/7. Functionally, involved in the isomerization of 5-deoxy-glucuronate (5DG) to 5-dehydro-2-deoxy-D-gluconate (DKG or 2-deoxy-5-keto-D-gluconate). The protein is 5-deoxy-glucuronate isomerase of Listeria monocytogenes serovar 1/2a (strain ATCC BAA-679 / EGD-e).